The chain runs to 197 residues: DnaJ homolog subfamily C member 5 (197 aa).

The J domain occupies 13 to 82 (GESLYHVLGL…RNIYDKYGSL (70 aa)). Residues 153–197 (EDLEAQMQSDERDTEGPVLVQPASATETTQLTSDSHASYHTDGFN) are disordered. Over residues 175–197 (ASATETTQLTSDSHASYHTDGFN) the composition is skewed to polar residues.

In terms of processing, palmitoylated. Palmitoylation occurs probably in the cysteine-rich domain and regulates DNAJC5 stable membrane attachment.

The protein resides in the cytoplasm. Its subcellular location is the cytosol. It localises to the membrane. The protein localises to the cytoplasmic vesicle. It is found in the secretory vesicle. The protein resides in the chromaffin granule membrane. Its subcellular location is the melanosome. It localises to the cell membrane. Its function is as follows. May have an important role in presynaptic function. May be involved in calcium-dependent neurotransmitter release at nerve endings. The chain is DnaJ homolog subfamily C member 5 from Xenopus laevis (African clawed frog).